We begin with the raw amino-acid sequence, 492 residues long: Cholesteryl ester transfer protein (492 aa).

The signal sequence occupies residues 1-17; sequence MLAVTLLSLALLGSTCA. Cysteines 160 and 201 form a disulfide. Asparagine 257 carries an N-linked (GlcNAc...) asparagine glycan.

This sequence belongs to the BPI/LBP/Plunc superfamily. BPI/LBP family.

The protein localises to the secreted. The enzyme catalyses cholesteryl (9Z-octadecenoate)(in) = cholesteryl (9Z-octadecenoate)(out). The catalysed reaction is 1,2,3-tri-(9Z-octadecenoyl)-glycerol(in) = 1,2,3-tri-(9Z-octadecenoyl)-glycerol(out). It catalyses the reaction cholesteryl (9Z,12Z)-octadecadienoate(in) = cholesteryl (9Z,12Z)-octadecadienoate(out). Involved in the transfer of neutral lipids, including cholesteryl ester and triglyceride, among lipoprotein particles. Allows the net movement of cholesteryl ester from high density lipoproteins/HDL to triglyceride-rich very low density lipoproteins/VLDL, and the equimolar transport of triglyceride from VLDL to HDL. Regulates the reverse cholesterol transport, by which excess cholesterol is removed from peripheral tissues and returned to the liver for elimination. The sequence is that of Cholesteryl ester transfer protein from Cricetulus griseus (Chinese hamster).